A 901-amino-acid polypeptide reads, in one-letter code: Probable inorganic carbon transporter subunit DabA (901 aa).

4 residues coordinate Zn(2+): cysteine 424, aspartate 426, histidine 606, and cysteine 621.

This sequence belongs to the inorganic carbon transporter (TC 9.A.2) DabA family. Forms a complex with DabB. It depends on Zn(2+) as a cofactor.

The protein resides in the cell membrane. Functionally, part of an energy-coupled inorganic carbon pump. The chain is Probable inorganic carbon transporter subunit DabA from Staphylococcus aureus (strain Mu3 / ATCC 700698).